The primary structure comprises 285 residues: tRNA pseudouridine synthase B (285 aa).

D38 acts as the Nucleophile in catalysis.

This sequence belongs to the pseudouridine synthase TruB family. Type 1 subfamily.

It catalyses the reaction uridine(55) in tRNA = pseudouridine(55) in tRNA. In terms of biological role, responsible for synthesis of pseudouridine from uracil-55 in the psi GC loop of transfer RNAs. This is tRNA pseudouridine synthase B from Geobacillus kaustophilus (strain HTA426).